Consider the following 66-residue polypeptide: UPF0434 protein M446_0487 (66 aa).

Belongs to the UPF0434 family.

This Methylobacterium sp. (strain 4-46) protein is UPF0434 protein M446_0487.